Here is a 345-residue protein sequence, read N- to C-terminus: Probable aldo-keto reductase 4 (345 aa).

The Proton donor role is filled by Tyr-63. His-130 is a binding site for substrate. Residue 209-219 participates in NADP(+) binding; that stretch reads SPLGRGFFASG.

It belongs to the aldo/keto reductase family.

This Arabidopsis thaliana (Mouse-ear cress) protein is Probable aldo-keto reductase 4.